The primary structure comprises 547 residues: MFS-type transporter M6 (547 aa).

The tract at residues 1-45 (MHRRRRDNLMTPAEMVASMKPPQSLSTEDDDGSRRDSESSADVLK) is disordered. The helical transmembrane segment at 81–101 (VLVVASFAAAISPFSTSTYYP) threads the bilayer. N-linked (GlcNAc...) asparagine glycosylation occurs at Asn118. Residues 146-166 (PMFLVCFAIYFVANVGLALQN) traverse the membrane as a helical segment. Residue Asn167 is glycosylated (N-linked (GlcNAc...) asparagine). 2 consecutive transmembrane segments (helical) span residues 206-226 (LIYA…IGGL) and 236-256 (VFWF…IFFG). N-linked (GlcNAc...) asparagine glycosylation is present at Asn274. 5 consecutive transmembrane segments (helical) span residues 317–337 (FILS…TSVL), 347–367 (YDAV…LLAY), 407–427 (LGFV…YGWQ), 432–452 (APLA…TGVM), and 469–489 (AVGA…VAVV). N-linked (GlcNAc...) asparagine glycosylation is present at Asn493. Residues 496 to 516 (AGIGWTATVTAGLWVLMMPTL) form a helical membrane-spanning segment.

Belongs to the major facilitator superfamily. CAR1 family.

It localises to the membrane. In terms of biological role, MFS-type transporter; part of the gene cluster that mediates the biosynthesis of squalestatin S1 (SQS1, also known as zaragozic acid A), a heavily oxidized fungal polyketide that offers potent cholesterol lowering activity by targeting squalene synthase (SS). The chain is MFS-type transporter M6 from Phoma sp. (strain ATCC 20986 / MF5453).